A 306-amino-acid chain; its full sequence is D-alanine--D-alanine ligase (306 aa).

The 203-residue stretch at 101–303 folds into the ATP-grasp domain; that stretch reads KLLWQGAGLP…FSQLVVRILE (203 aa). 134–189 is an ATP binding site; it reads ISALGLPLIVKPSREGSSVGMTKVVEENALQGALSLAFQHDDEILIEKWLCGPEFT. Aspartate 257, glutamate 270, and asparagine 272 together coordinate Mg(2+).

The protein belongs to the D-alanine--D-alanine ligase family. Mg(2+) serves as cofactor. The cofactor is Mn(2+).

Its subcellular location is the cytoplasm. It catalyses the reaction 2 D-alanine + ATP = D-alanyl-D-alanine + ADP + phosphate + H(+). The protein operates within cell wall biogenesis; peptidoglycan biosynthesis. Functionally, cell wall formation. This chain is D-alanine--D-alanine ligase, found in Salmonella paratyphi A (strain ATCC 9150 / SARB42).